The primary structure comprises 216 residues: Octanoyltransferase (216 aa).

Residues 30–216 enclose the BPL/LPL catalytic domain; that stretch reads GEAGEAVWLL…KRQFFEVFGA (187 aa). Substrate-binding positions include 69-76, 149-151, and 162-164; these read RGGQYTYH, AIG, and GLS. Catalysis depends on Cys-180, which acts as the Acyl-thioester intermediate.

Belongs to the LipB family.

It localises to the cytoplasm. It carries out the reaction octanoyl-[ACP] + L-lysyl-[protein] = N(6)-octanoyl-L-lysyl-[protein] + holo-[ACP] + H(+). Its pathway is protein modification; protein lipoylation via endogenous pathway; protein N(6)-(lipoyl)lysine from octanoyl-[acyl-carrier-protein]: step 1/2. Functionally, catalyzes the transfer of endogenously produced octanoic acid from octanoyl-acyl-carrier-protein onto the lipoyl domains of lipoate-dependent enzymes. Lipoyl-ACP can also act as a substrate although octanoyl-ACP is likely to be the physiological substrate. The polypeptide is Octanoyltransferase (Jannaschia sp. (strain CCS1)).